Reading from the N-terminus, the 425-residue chain is UDP-N-acetylglucosamine 1-carboxyvinyltransferase (425 aa).

22–23 serves as a coordination point for phosphoenolpyruvate; sequence KN. Residue Arg98 participates in UDP-N-acetyl-alpha-D-glucosamine binding. Catalysis depends on Cys122, which acts as the Proton donor. 2-(S-cysteinyl)pyruvic acid O-phosphothioketal is present on Cys122. Residues 127 to 131, Asp313, and Ile335 contribute to the UDP-N-acetyl-alpha-D-glucosamine site; that span reads RPVDQ.

It belongs to the EPSP synthase family. MurA subfamily.

It localises to the cytoplasm. The enzyme catalyses phosphoenolpyruvate + UDP-N-acetyl-alpha-D-glucosamine = UDP-N-acetyl-3-O-(1-carboxyvinyl)-alpha-D-glucosamine + phosphate. It functions in the pathway cell wall biogenesis; peptidoglycan biosynthesis. Functionally, cell wall formation. Adds enolpyruvyl to UDP-N-acetylglucosamine. The protein is UDP-N-acetylglucosamine 1-carboxyvinyltransferase of Xylella fastidiosa (strain M23).